A 127-amino-acid chain; its full sequence is DNA-directed RNA polymerase subunit omega (127 aa).

It belongs to the RNA polymerase subunit omega family. As to quaternary structure, the RNAP catalytic core consists of 2 alpha, 1 beta, 1 beta' and 1 omega subunit. When a sigma factor is associated with the core the holoenzyme is formed, which can initiate transcription.

The enzyme catalyses RNA(n) + a ribonucleoside 5'-triphosphate = RNA(n+1) + diphosphate. Functionally, promotes RNA polymerase assembly. Latches the N- and C-terminal regions of the beta' subunit thereby facilitating its interaction with the beta and alpha subunits. The polypeptide is DNA-directed RNA polymerase subunit omega (rpoZ) (Rickettsia prowazekii (strain Madrid E)).